The sequence spans 93 residues: Transcription factor RADIALIS (93 aa).

In terms of domain architecture, SANT spans 6 to 61; it reads GSGRPWSAKENKAFERALAVYDKDTPDRWANVARAVEGRTPEEVKKHYEILVEDIK.

In terms of tissue distribution, specifically expressed in the dorsal region of developing flowers.

The protein resides in the nucleus. Functionally, involved in the dorsovental asymmetry of flowers. Promotes dorsal identity. The sequence is that of Transcription factor RADIALIS (RAD) from Antirrhinum majus (Garden snapdragon).